We begin with the raw amino-acid sequence, 303 residues long: Lipoyl synthase (303 aa).

The [4Fe-4S] cluster site is built by Cys34, Cys39, Cys45, Cys60, Cys64, Cys67, and Ser273. The Radical SAM core domain occupies 46-262 (WSKKHATVMI…ERVARTKGFL (217 aa)).

Belongs to the radical SAM superfamily. Lipoyl synthase family. It depends on [4Fe-4S] cluster as a cofactor.

The protein resides in the cytoplasm. The enzyme catalyses [[Fe-S] cluster scaffold protein carrying a second [4Fe-4S](2+) cluster] + N(6)-octanoyl-L-lysyl-[protein] + 2 oxidized [2Fe-2S]-[ferredoxin] + 2 S-adenosyl-L-methionine + 4 H(+) = [[Fe-S] cluster scaffold protein] + N(6)-[(R)-dihydrolipoyl]-L-lysyl-[protein] + 4 Fe(3+) + 2 hydrogen sulfide + 2 5'-deoxyadenosine + 2 L-methionine + 2 reduced [2Fe-2S]-[ferredoxin]. The protein operates within protein modification; protein lipoylation via endogenous pathway; protein N(6)-(lipoyl)lysine from octanoyl-[acyl-carrier-protein]: step 2/2. Functionally, catalyzes the radical-mediated insertion of two sulfur atoms into the C-6 and C-8 positions of the octanoyl moiety bound to the lipoyl domains of lipoate-dependent enzymes, thereby converting the octanoylated domains into lipoylated derivatives. The protein is Lipoyl synthase of Rickettsia bellii (strain OSU 85-389).